The following is a 197-amino-acid chain: SIGLEC family-like protein 1 (197 aa).

A helical membrane pass occupies residues G118–V138. Residues V160–V179 form a disordered region. The segment covering A162–G176 has biased composition (basic and acidic residues).

It localises to the membrane. The chain is SIGLEC family-like protein 1 (SIGLECL1) from Homo sapiens (Human).